Reading from the N-terminus, the 250-residue chain is uncharacterized protein (250 aa).

7 helical membrane-spanning segments follow: residues 36–56 (VALG…VPAV), 73–93 (PLYM…GFAM), 101–121 (AGAL…SVML), 128–148 (VAAT…FGYT), 156–176 (FGSF…VSIF), 180–200 (PALL…LIAY), and 225–245 (FGAL…LSFF).

This sequence belongs to the BI1 family.

Its subcellular location is the cell membrane. This is an uncharacterized protein from Caulobacter vibrioides (strain ATCC 19089 / CIP 103742 / CB 15) (Caulobacter crescentus).